A 45-amino-acid polypeptide reads, in one-letter code: Thymosin beta (45 aa).

Positions 1–45 (MADKPNMTEITSFDKTKLRKTETQEKNPLPTKETIEQERQGESTP) are disordered. Basic and acidic residues-rich tracts occupy residues 12–25 (SFDK…ETQE) and 33–45 (ETIE…ESTP).

This sequence belongs to the thymosin beta family.

It is found in the cytoplasm. The protein resides in the cytoskeleton. In terms of biological role, plays an important role in the organization of the cytoskeleton. Binds to and sequesters actin monomers (G actin) and therefore inhibits actin polymerization. The polypeptide is Thymosin beta (tmsb) (Danio rerio (Zebrafish)).